The following is a 102-amino-acid chain: Urease subunit beta (102 aa).

This sequence belongs to the urease beta subunit family. Heterotrimer of UreA (gamma), UreB (beta) and UreC (alpha) subunits. Three heterotrimers associate to form the active enzyme.

The protein localises to the cytoplasm. It catalyses the reaction urea + 2 H2O + H(+) = hydrogencarbonate + 2 NH4(+). The protein operates within nitrogen metabolism; urea degradation; CO(2) and NH(3) from urea (urease route): step 1/1. The chain is Urease subunit beta from Pseudomonas syringae pv. tomato (strain ATCC BAA-871 / DC3000).